A 103-amino-acid polypeptide reads, in one-letter code: Sperm-associated antigen 11A (103 aa).

An N-terminal signal peptide occupies residues 1–24 (MRQRLLPSVTSLLLVALLFPGSSQ). N29 carries N-linked (GlcNAc...) asparagine glycosylation.

The protein belongs to the SPAG11 family.

The protein localises to the secreted. Functionally, has antimicrobial activity against E.coli. Plays a role in the defense response in the male reproductive tract, contributing to sperm maturation, storage and protection. This chain is Sperm-associated antigen 11A, found in Pan troglodytes (Chimpanzee).